The sequence spans 367 residues: MVLISTPPPAYAHNRKTSQEKKRRDEINAKIKELQLLIQNESDNEKMTQGDVLNRAVEVVSRMETESPGPSSNPNRKGFFDGFRSIESLTYSFIKSLGVNSDVCQDFVQRAKQFFDRERSSLLSTVSGKSKRRSESEILHSSMSYRSQSSSPSTSESGITIDRKEVKKNREQDRRDRQGEAFDALKNFIIENKLMTSHQVEKMQRLNTLDIIIAYIQNKKHNFVSRSDQEQSLYAHAIAEGKKTAKNIAFQFFKSDRHLVVRCADLEKFFEFSLSPKPLFGFPSMPIPIPPPSFPIFPFRPFPFFPMPMAPMATSPKSQQSPSYSLDSPPPSSDTSSSSIETPSTPNENSNSNPKASRKSKLFRPWE.

Pro residues predominate over residues 1–10; that stretch reads MVLISTPPPA. The tract at residues 1–24 is disordered; it reads MVLISTPPPAYAHNRKTSQEKKRR. Residues 11-24 form a basic motif 1 region; sequence YAHNRKTSQEKKRR. The bHLH 1 domain occupies 11-63; the sequence is YAHNRKTSQEKKRRDEINAKIKELQLLIQNESDNEKMTQGDVLNRAVEVVSRM. A helix-loop-helix motif 1 region spans residues 25–63; the sequence is DEINAKIKELQLLIQNESDNEKMTQGDVLNRAVEVVSRM. Disordered regions lie at residues 133–177 and 313–367; these read RSES…RRDR and ATSP…RPWE. Residues 141-157 show a composition bias toward low complexity; that stretch reads SSMSYRSQSSSPSTSES. The span at 161–177 shows a compositional bias: basic and acidic residues; it reads IDRKEVKKNREQDRRDR. Positions 162–175 are basic motif 2; the sequence is DRKEVKKNREQDRR. Positions 162-219 constitute a bHLH 2 domain; it reads DRKEVKKNREQDRRDRQGEAFDALKNFIIENKLMTSHQVEKMQRLNTLDIIIAYIQNK. Positions 176–219 are helix-loop-helix motif 2; sequence DRQGEAFDALKNFIIENKLMTSHQVEKMQRLNTLDIIIAYIQNK. Positions 313 to 354 are enriched in low complexity; that stretch reads ATSPKSQQSPSYSLDSPPPSSDTSSSSIETPSTPNENSNSNP. Basic residues predominate over residues 356–367; that stretch reads ASRKSKLFRPWE.

As to quaternary structure, interacts with unc-37.

The protein localises to the nucleus. Probable transcription factor. Binds 5'-TGCCACGTGTCCA-3' in vitro, probably via the E-box motif 5'-CA[TC][AG]TG-3'. Acts in embryonic development in a Notch-dependent manner, perhaps as a direct target of transcriptional regulator lag-1 in the Notch signaling pathway. Also acts in embryonic development in a Notch-independent manner. Plays a role in both Notch-dependent and -independent pathways in the execution of neuronal lineage decisions in the embryo. Also involved in regulating cell fate leading to formation of neuronal structures known as postdeirids. Involved in the pattern of cell fusion with a large syncytium known as hyp-7, during larval development, in hermaphrodites. Plays a role in regulating the activity of homeobox protein mab-5 in Pn.p cells. This Caenorhabditis elegans protein is Regulator of fusion ref-1.